A 684-amino-acid chain; its full sequence is Pentatricopeptide repeat-containing protein At4g14850 (684 aa).

PPR repeat units follow at residues 5–39 (SADA…LDSP), 41–71 (PPFL…TPAR), 72–106 (NVVS…GVVP), 107–141 (NDFT…GRIL), 142–172 (DVFV…IPER), 173–207 (NLET…DGHP), 208–242 (NSIT…GFDT), 243–277 (DVSV…NAVS), 278–308 (WCSL…IVET), 309–343 (SDFM…CVER), 344–374 (TIFV…MPEK), 375–409 (NLVT…GCGP), 412–442 (NYMT…MRST), and 448–478 (GAEH…MPIQ). A type E motif; degenerate region spans residues 483 to 558 (VWGALQNACR…GAGYSWITVK (76 aa)). The type E(+) motif; degenerate stretch occupies residues 559-589 (NQVHAFQAKDRSHILNKEIQTTLAKLRNEME). The segment at 590–684 (AAGYKPDLKL…DGICSCKDYW (95 aa)) is type DYW motif.

This sequence belongs to the PPR family. PCMP-H subfamily.

Functionally, acts as a regulatory factor of isoprenoid biosynthesis. Could bind RNA. This is Pentatricopeptide repeat-containing protein At4g14850 (LOI1) from Arabidopsis thaliana (Mouse-ear cress).